Reading from the N-terminus, the 302-residue chain is Sulfate adenylyltransferase subunit 2 (302 aa).

The interval 280-302 (RQGRAIDHDQSGSMELKKRQGYF) is disordered.

Belongs to the PAPS reductase family. CysD subfamily. Heterodimer composed of CysD, the smaller subunit, and CysN.

It catalyses the reaction sulfate + ATP + H(+) = adenosine 5'-phosphosulfate + diphosphate. The protein operates within sulfur metabolism; hydrogen sulfide biosynthesis; sulfite from sulfate: step 1/3. Functionally, with CysN forms the ATP sulfurylase (ATPS) that catalyzes the adenylation of sulfate producing adenosine 5'-phosphosulfate (APS) and diphosphate, the first enzymatic step in sulfur assimilation pathway. APS synthesis involves the formation of a high-energy phosphoric-sulfuric acid anhydride bond driven by GTP hydrolysis by CysN coupled to ATP hydrolysis by CysD. This chain is Sulfate adenylyltransferase subunit 2, found in Vibrio cholerae serotype O1 (strain ATCC 39315 / El Tor Inaba N16961).